A 103-amino-acid chain; its full sequence is 6-pyruvoyl tetrahydrobiopterin synthase (103 aa).

The residue at position 1 (Ala-1) is an N-acetylalanine. Zn(2+) is bound at residue His-27. Active-site charge relay system residues include His-53 and Glu-92.

It belongs to the PTPS family. Homohexamer formed of two homotrimers in a head to head fashion. It depends on Zn(2+) as a cofactor.

It carries out the reaction 7,8-dihydroneopterin 3'-triphosphate = 6-pyruvoyl-5,6,7,8-tetrahydropterin + triphosphate + H(+). Its pathway is cofactor biosynthesis; tetrahydrobiopterin biosynthesis; tetrahydrobiopterin from 7,8-dihydroneopterin triphosphate: step 1/3. Functionally, involved in the biosynthesis of tetrahydrobiopterin, an essential cofactor of aromatic amino acid hydroxylases. Catalyzes the transformation of 7,8-dihydroneopterin triphosphate into 6-pyruvoyl tetrahydropterin. The sequence is that of 6-pyruvoyl tetrahydrobiopterin synthase (pts) from Salmo salar (Atlantic salmon).